The primary structure comprises 550 residues: 4-coumarate--CoA ligase-like 8 (550 aa).

6 residues coordinate ATP: S207, S208, G209, T210, T211, and K215. Residue F253 coordinates (E)-4-coumaroyl-AMP. Residue R274 coordinates CoA. The SBD1 stretch occupies residues 276–347; sequence DLGEMMAAVE…KKYPTVDVYQ (72 aa). G325, Q347, G348, and T352 together coordinate (E)-4-coumaroyl-AMP. ATP-binding residues include Q347, G348, T352, D430, and R445. The tract at residues 348-412 is SBD2; sequence GYALTESNGA…LKGPSIAKGY (65 aa). Residues K447 and K451 each contribute to the (E)-4-coumaroyl-AMP site. Residues K453 and G454 each coordinate CoA. K536 contributes to the ATP binding site. A Microbody targeting signal motif is present at residues 548–550; the sequence is SKI.

It belongs to the ATP-dependent AMP-binding enzyme family. The cofactor is Mg(2+).

The protein resides in the peroxisome. It catalyses the reaction (E)-4-coumarate + ATP + CoA = (E)-4-coumaroyl-CoA + AMP + diphosphate. It carries out the reaction (E)-4-coumarate + ATP + H(+) = (E)-4-coumaroyl-AMP + diphosphate. The enzyme catalyses (E)-4-coumaroyl-AMP + CoA = (E)-4-coumaroyl-CoA + AMP + H(+). Functionally, carboxylate--CoA ligase that may use 4-coumarate as substrate. Follows a two-step reaction mechanism, wherein the carboxylate substrate first undergoes adenylation by ATP, followed by a thioesterification in the presence of CoA to yield the final CoA thioester. The protein is 4-coumarate--CoA ligase-like 8 of Arabidopsis thaliana (Mouse-ear cress).